A 525-amino-acid chain; its full sequence is Nucleolar complex protein 4 homolog (525 aa).

3 helical membrane passes run 305–325 (AAYDIGGAISLSALNGLFVPI), 356–376 (FFHLANIFLSSTHLPVYLVAA), and 384–404 (LSLTAPPTALLILLPFICNLI).

It belongs to the CBF/MAK21 family.

Its subcellular location is the nucleus membrane. The protein localises to the nucleus. It localises to the nucleolus. The chain is Nucleolar complex protein 4 homolog (noc4l) from Danio rerio (Zebrafish).